The following is a 198-amino-acid chain: ATP synthase subunit delta (198 aa).

It belongs to the ATPase delta chain family. As to quaternary structure, F-type ATPases have 2 components, F(1) - the catalytic core - and F(0) - the membrane proton channel. F(1) has five subunits: alpha(3), beta(3), gamma(1), delta(1), epsilon(1). F(0) has three main subunits: a(1), b(2) and c(10-14). The alpha and beta chains form an alternating ring which encloses part of the gamma chain. F(1) is attached to F(0) by a central stalk formed by the gamma and epsilon chains, while a peripheral stalk is formed by the delta and b chains.

The protein localises to the cell inner membrane. F(1)F(0) ATP synthase produces ATP from ADP in the presence of a proton or sodium gradient. F-type ATPases consist of two structural domains, F(1) containing the extramembraneous catalytic core and F(0) containing the membrane proton channel, linked together by a central stalk and a peripheral stalk. During catalysis, ATP synthesis in the catalytic domain of F(1) is coupled via a rotary mechanism of the central stalk subunits to proton translocation. Functionally, this protein is part of the stalk that links CF(0) to CF(1). It either transmits conformational changes from CF(0) to CF(1) or is implicated in proton conduction. The chain is ATP synthase subunit delta from Gluconacetobacter diazotrophicus (strain ATCC 49037 / DSM 5601 / CCUG 37298 / CIP 103539 / LMG 7603 / PAl5).